The primary structure comprises 274 residues: Small ribosomal subunit protein uS2 (274 aa).

The segment at 255–274 is disordered; it reads AEAESEDKGEVLYSFDDEEE.

It belongs to the universal ribosomal protein uS2 family.

This is Small ribosomal subunit protein uS2 from Gloeobacter violaceus (strain ATCC 29082 / PCC 7421).